The following is a 310-amino-acid chain: Pirin-like protein At1g50590 (310 aa).

It belongs to the pirin family.

Its subcellular location is the nucleus. This Arabidopsis thaliana (Mouse-ear cress) protein is Pirin-like protein At1g50590.